The sequence spans 519 residues: Probable pectinesterase/pectinesterase inhibitor 36 (519 aa).

The signal sequence occupies residues methionine 1–alanine 25. Residues asparagine 27–phenylalanine 141 are pectinesterase inhibitor 36. Asparagine 92 and asparagine 130 each carry an N-linked (GlcNAc...) asparagine glycan. The tract at residues glycine 147–serine 196 is disordered. Residues threonine 164–proline 184 show a composition bias toward basic residues. Positions arginine 186 to serine 196 are enriched in polar residues. A pectinesterase 36 region spans residues aspartate 205–aspartate 505. Substrate-binding residues include threonine 283 and glutamine 313. Aspartate 336 serves as the catalytic Proton donor; for pectinesterase activity. Aspartate 357 (nucleophile; for pectinesterase activity) is an active-site residue. Substrate-binding residues include arginine 425 and tryptophan 427.

This sequence in the N-terminal section; belongs to the PMEI family. It in the C-terminal section; belongs to the pectinesterase family. As to expression, expressed in siliques.

The protein resides in the secreted. It is found in the cell wall. The catalysed reaction is [(1-&gt;4)-alpha-D-galacturonosyl methyl ester](n) + n H2O = [(1-&gt;4)-alpha-D-galacturonosyl](n) + n methanol + n H(+). It participates in glycan metabolism; pectin degradation; 2-dehydro-3-deoxy-D-gluconate from pectin: step 1/5. Functionally, acts in the modification of cell walls via demethylesterification of cell wall pectin. This is Probable pectinesterase/pectinesterase inhibitor 36 (PME36) from Arabidopsis thaliana (Mouse-ear cress).